We begin with the raw amino-acid sequence, 519 residues long: MIPVSLVVVVVGGWTVVYLTDLVLKSSVYFKHSYEDWLENNGLSISPFHIRWQTAVFNRAFYSWGRRKARMLYQWFNFGMVFGVIAMFSSFFLLGKTLMQTLAQMMADSPSSYSSSSSSSSSSSSSSSSSSSSSSSLHNEQVLQVVVPGINLPVNQLTYFFTAVLISGVVHEIGHGIAAIREQVRFNGFGIFLFIIYPGAFVDLFTTHLQLISPVQQLRIFCAGIWHNFVLALLGILALVLLPVILLPFYYTGVGVLITEVAEDSPAIGPRGLFVGDLVTHLQDCPVTNVQDWNECLDTIAYEPQIGYCISASTLQQLSFPVRAYKRLDGSTECCNNHSLTDVCFSYRNNFNKRLHTCLPARKAVEATQVCRTNKDCKKSSSSSFCIIPSLETHTRLIKVKHPPQIDMLYVGHPLHLHYTVSITSFIPRFNFLSIDLPVVVETFVKYLISLSGALAIVNAVPCFALDGQWILNSFLDATLTSVIGDNDVKDLIGFFILLGGSVLLAANVTLGLWMVTAR.

Topologically, residues 1–3 are cytoplasmic; it reads MIP. A helical membrane pass occupies residues 4–24; the sequence is VSLVVVVVGGWTVVYLTDLVL. Over 25 to 74 the chain is Lumenal; that stretch reads KSSVYFKHSYEDWLENNGLSISPFHIRWQTAVFNRAFYSWGRRKARMLYQ. A run of 2 helical transmembrane segments spans residues 75 to 95 and 96 to 107; these read WFNF…FLLG and KTLMQTLAQMMA. The Lumenal segment spans residues 108–144; sequence DSPSSYSSSSSSSSSSSSSSSSSSSSSSSLHNEQVLQ. The segment at 115–135 is disordered; the sequence is SSSSSSSSSSSSSSSSSSSSS. A helical transmembrane segment spans residues 145 to 169; the sequence is VVVPGINLPVNQLTYFFTAVLISGV. His171 serves as a coordination point for Zn(2+). Glu172 is a catalytic residue. Helical transmembrane passes span 174–186, 187–209, and 229–251; these read GHGI…QVRF, NGFG…TTHL, and FVLA…PFYY. His175 provides a ligand contact to Zn(2+). Residues 252-446 are Lumenal-facing; that stretch reads TGVGVLITEV…LPVVVETFVK (195 aa). N-linked (GlcNAc...) asparagine glycosylation is present at Asn337. 2 helical membrane-spanning segments follow: residues 447-464 and 465-476; these read YLIS…VPCF and ALDGQWILNSFL. The Lumenal segment spans residues 477–492; that stretch reads DATLTSVIGDNDVKDL. Residues 493 to 513 form a helical membrane-spanning segment; that stretch reads IGFFILLGGSVLLAANVTLGL. The Cytoplasmic segment spans residues 514-519; that stretch reads WMVTAR.

The protein belongs to the peptidase M50A family. It depends on Zn(2+) as a cofactor. Expressed in heart, brain, placenta, lung, liver, muscle, kidney and pancreas.

It is found in the membrane. Its subcellular location is the cytoplasm. The protein localises to the golgi apparatus membrane. The enzyme catalyses Cleaves several transcription factors that are type-2 transmembrane proteins within membrane-spanning domains. Known substrates include sterol regulatory element-binding protein (SREBP) -1, SREBP-2 and forms of the transcriptional activator ATF6. SREBP-2 is cleaved at the site 477-DRSRILL-|-CVLTFLCLSFNPLTSLLQWGGA-505. The residues Asn-Pro, 11 residues distal to the site of cleavage in the membrane-spanning domain, are important for cleavage by S2P endopeptidase. Replacement of either of these residues does not prevent cleavage, but there is no cleavage if both of these residues are replaced.. In terms of biological role, zinc metalloprotease that mediates intramembrane proteolysis of proteins such as ATF6, ATF6B, SREBF1/SREBP1 and SREBF2/SREBP2. Catalyzes the second step in the proteolytic activation of the sterol regulatory element-binding proteins (SREBPs) SREBF1/SREBP1 and SREBF2/SREBP2: cleaves SREBPs within the first transmembrane segment, thereby releasing the N-terminal segment with a portion of the transmembrane segment attached. Mature N-terminal SREBP fragments shuttle to the nucleus and activate gene transcription. Also mediates the second step in the proteolytic activation of the cyclic AMP-dependent transcription factor ATF-6 (ATF6 and ATF6B). Involved in intramembrane proteolysis during bone formation. In astrocytes and osteoblasts, upon DNA damage and ER stress, mediates the second step of the regulated intramembrane proteolytic activation of the transcription factor CREB3L1, leading to the inhibition of cell-cycle progression. The chain is Membrane-bound transcription factor site-2 protease from Homo sapiens (Human).